The chain runs to 117 residues: Heat shock 70 kDa protein 1-like (117 aa).

Residues 72 to 75 (ERAK) and 84 to 87 (GSTR) each bind ATP.

Belongs to the heat shock protein 70 family. In terms of assembly, interacts with PRKN. As to expression, detected at higher levels in caput epididymal spermatazoa than in cauda epididymal spermatazoa (at protein level).

Molecular chaperone implicated in a wide variety of cellular processes, including protection of the proteome from stress, folding and transport of newly synthesized polypeptides, activation of proteolysis of misfolded proteins and the formation and dissociation of protein complexes. Plays a pivotal role in the protein quality control system, ensuring the correct folding of proteins, the re-folding of misfolded proteins and controlling the targeting of proteins for subsequent degradation. This is achieved through cycles of ATP binding, ATP hydrolysis and ADP release, mediated by co-chaperones. The affinity for polypeptides is regulated by its nucleotide bound state. In the ATP-bound form, it has a low affinity for substrate proteins. However, upon hydrolysis of the ATP to ADP, it undergoes a conformational change that increases its affinity for substrate proteins. It goes through repeated cycles of ATP hydrolysis and nucleotide exchange, which permits cycles of substrate binding and release. Positive regulator of PRKN translocation to damaged mitochondria. The sequence is that of Heat shock 70 kDa protein 1-like from Mesocricetus auratus (Golden hamster).